The sequence spans 187 residues: Thioredoxin F, chloroplastic (187 aa).

The N-terminal 72 residues, 1-72 (MALRLSVSSS…GSDTATVGAE (72 aa)), are a transit peptide targeting the chloroplast. Positions 73–186 (AEAVAVTGQV…LIQAIETVKS (114 aa)) constitute a Thioredoxin domain. Catalysis depends on nucleophile residues Cys-111 and Cys-114. A disulfide bond links Cys-111 and Cys-114.

It belongs to the thioredoxin family. Plant F-type subfamily.

The protein resides in the plastid. It is found in the chloroplast. Thiol-disulfide oxidoreductase involved in the redox regulation of enzymes of both reductive pentose phosphate pathway (Calvin-Benson cycle) and oxidative pentose phosphate pathway. The chain is Thioredoxin F, chloroplastic from Oryza sativa subsp. japonica (Rice).